A 360-amino-acid polypeptide reads, in one-letter code: POU domain, class 5, transcription factor 1 (360 aa).

2 disordered regions span residues 1–51 (MAGH…GPGV) and 88–114 (GGLE…SPEP). Positions 4–12 (HLTSDFAFS) match the 9aaTAD motif. Residue serine 111 is modified to Phosphoserine; by MAPK. Residue lysine 123 forms a Glycyl lysine isopeptide (Lys-Gly) (interchain with G-Cter in SUMO) linkage. The region spanning 138–212 (DIKALQKELE…LLQKWVEEAD (75 aa)) is the POU-specific domain. DNA contacts are provided by arginine 157 and glutamine 164. DNA-binding stretches follow at residues 180-186 (SQTTICR) and 193-196 (SFKN). Positions 230 to 289 (RKRKRTSIENRVRGNLENLFLQCPKPTLQQISHIAQQLGLEKDVVRVWFCNRRQKGKRSS) form a DNA-binding region, homeobox. The residue at position 235 (threonine 235) is a Phosphothreonine. Serine 236, serine 289, serine 290, and serine 355 each carry phosphoserine.

Belongs to the POU transcription factor family. Class-5 subfamily. Interacts with PKM. Interacts with WWP2. Interacts with UBE2I and ZSCAN10. Interacts with PCGF1. Interacts with ESRRB; recruits ESRRB near the POU5F1-SOX2 element in the NANOG proximal promoter; the interaction is DNA independent. Interacts with ZNF322. Interacts with MAPK8 and MAPK9; the interaction allows MAPK8 and MAPK9 to phosphorylate POU5F1 on Ser-355. Interacts (when phosphorylated on Ser-355) with FBXW8. Interacts with FBXW4. Interacts with SOX2 and SOX15; binds synergistically with either SOX2 or SOX15 to DNA. Interacts with DDX56. Sumoylation enhances the protein stability, DNA binding and transactivation activity. Sumoylation is required for enhanced YES1 expression. In terms of processing, ubiquitinated; undergoes 'Lys-63'-linked polyubiquitination by WWP2 leading to proteasomal degradation. Post-translationally, ERK1/2-mediated phosphorylation at Ser-111 promotes nuclear exclusion and proteasomal degradation. Phosphorylation at Thr-235 and Ser-236 decrease DNA-binding and alters ability to activate transcription.

It localises to the cytoplasm. Its subcellular location is the nucleus. Its function is as follows. Transcription factor that binds to the octamer motif (5'-ATTTGCAT-3'). Forms a trimeric complex with SOX2 or SOX15 on DNA and controls the expression of a number of genes involved in embryonic development such as YES1, FGF4, UTF1 and ZFP206. Critical for early embryogenesis and for embryonic stem cell pluripotency. The protein is POU domain, class 5, transcription factor 1 (POU5F1) of Pan troglodytes (Chimpanzee).